A 111-amino-acid polypeptide reads, in one-letter code: MEERIRLSILLDIYGELLTEKQRNVLDLYYNQDLSLAEIAEHTSTSRQAVYDIIKRCHMLLVHYEDKLNLMEEKKNIEENKKGIIDFIDSLYSDKNAEVLDKIKNYIMNNI.

This sequence belongs to the UPF0122 family.

Its function is as follows. Might take part in the signal recognition particle (SRP) pathway. This is inferred from the conservation of its genetic proximity to ftsY/ffh. May be a regulatory protein. The protein is UPF0122 protein CKR_1296 of Clostridium kluyveri (strain NBRC 12016).